The chain runs to 514 residues: Nucleus accumbens-associated protein 1 (514 aa).

In terms of domain architecture, BTB spans 30-94 (CDVSVVVKGH…CYTGRLSMNM (65 aa)). Lys-167 participates in a covalent cross-link: Glycyl lysine isopeptide (Lys-Gly) (interchain with G-Cter in SUMO1); alternate. Lys-167 participates in a covalent cross-link: Glycyl lysine isopeptide (Lys-Gly) (interchain with G-Cter in SUMO2); alternate. Residue Lys-182 forms a Glycyl lysine isopeptide (Lys-Gly) (interchain with G-Cter in SUMO2) linkage. Disordered stretches follow at residues 183–218 (RLWDSSQKEAGGSGGNNGSRKMAKFSTPDLAPNRMP) and 241–279 (GPSMSERTSPGTSSAYTSDSPSSYHNEEDEEEDAGEEGT). Ser-187 carries the phosphoserine modification. Polar residues predominate over residues 242-251 (PSMSERTSPG). Ser-245 is modified (phosphoserine; by PKC). A compositionally biased stretch (low complexity) spans 252 to 264 (TSSAYTSDSPSSY). Residues 267–279 (EEDEEEDAGEEGT) show a composition bias toward acidic residues. Glycyl lysine isopeptide (Lys-Gly) (interchain with G-Cter in SUMO2) cross-links involve residues Lys-304, Lys-438, Lys-466, and Lys-485. Positions 360–457 (GTNVYITRAQ…DMCTNARRVV (98 aa)) constitute a BEN domain. Ser-492 and Ser-496 each carry phosphoserine.

In terms of assembly, homooligomer; mediated by the BTB domain. Both isoforms interact with HDAC3 and HDAC4. Interacts (via BTB domain) with CUL3, PSMD7 and RCOR1. Phosphorylated by protein kinase C (PKC). Highly expressed in the hippocampus, brain cortex, cerebellum and brainstem. Expressed in the nucleus accumbens, olfactory tubercle, the striatum, frontal and parietal cortex and ventral pallidum. Weakly expressed in the heart, liver, kidney, spleen, testis, and skeletal muscle. Isoform 2 is expressed in the brain and liver, less abundantly expressed in the brain than isoform 1.

The protein resides in the nucleus. It localises to the cytoplasm. Its function is as follows. Functions as a transcriptional repressor. Isoform 1 is a stronger transcriptional repressor than isoform 2. Seems to function as a transcriptional corepressor in neuronal cells through recruitment of HDAC3 and HDAC4. Contributes to tumor progression, and tumor cell proliferation and survival. This may be mediated at least in part through repressing transcriptional activity of GADD45GIP1. Required for recruiting the proteasome from the nucleus to the cytoplasm and dendritic spines. The chain is Nucleus accumbens-associated protein 1 (Nacc1) from Rattus norvegicus (Rat).